The following is a 156-amino-acid chain: Low molecular weight protein-tyrosine-phosphatase YfkJ (156 aa).

The active-site Nucleophile is Cys-8. Arg-14 is a catalytic residue. The Proton donor role is filled by Asp-125.

This sequence belongs to the low molecular weight phosphotyrosine protein phosphatase family.

It carries out the reaction O-phospho-L-tyrosyl-[protein] + H2O = L-tyrosyl-[protein] + phosphate. With respect to regulation, efficiently inhibited by Cu(2+) ion, Zn(2+) ion and N-ethylmaleimide, while the addition of Mg(2+), Ca(2+) or Fe(3+) ions has minimal effect. Inhibited in a competitive manner by vanadate. Functionally, dephosphorylates the phosphotyrosine-containing proteins. Involved in ethanol stress resistance. The protein is Low molecular weight protein-tyrosine-phosphatase YfkJ (yfkJ) of Bacillus subtilis (strain 168).